The primary structure comprises 61 residues: Small ribosomal subunit protein uS14 (61 aa).

Zn(2+) is bound by residues Cys24, Cys27, Cys40, and Cys43.

This sequence belongs to the universal ribosomal protein uS14 family. Zinc-binding uS14 subfamily. Part of the 30S ribosomal subunit. Contacts proteins S3 and S10. It depends on Zn(2+) as a cofactor.

Functionally, binds 16S rRNA, required for the assembly of 30S particles and may also be responsible for determining the conformation of the 16S rRNA at the A site. The chain is Small ribosomal subunit protein uS14 from Campylobacter curvus (strain 525.92).